We begin with the raw amino-acid sequence, 68 residues long: Phosphatidylinositol N-acetylglucosaminyltransferase ERI1 subunit (68 aa).

Helical transmembrane passes span Phe-8 to Leu-28 and Phe-34 to Ile-54.

Component of the phosphatidylinositol N-acetylglucosaminyltransferase (GPI-GlcNAc transferase) complex composed of at least GPI1, GPI2, GPI3, GPI15, GPI19 and ERI1. Interacts with GPI2. Interacts with GTP-bound RAS2 in an effector loop-dependent manner.

The protein resides in the endoplasmic reticulum membrane. The protein operates within glycolipid biosynthesis; glycosylphosphatidylinositol-anchor biosynthesis. In terms of biological role, probable component of the GPI-GlcNAc transferase (GPI-GnT) complex in the endoplasmic reticulum, a complex that catalyzes transfer of GlcNAc from UDP-GlcNAc to an acceptor phosphatidylinositol, the first step in the production of GPI-anchors for cell surface proteins. Ras may inhibit the enzyme activity of the GPI-GnT complex via the association between ERI1 and RAS2. The polypeptide is Phosphatidylinositol N-acetylglucosaminyltransferase ERI1 subunit (ERI1) (Saccharomyces cerevisiae (strain ATCC 204508 / S288c) (Baker's yeast)).